The chain runs to 341 residues: HTH-type transcriptional repressor PurR (341 aa).

The region spanning 2 to 56 (ATIKDVAKHAGVSTTTVSHVINKTRFVAEDTKAAVWAAIKALNYSPSAVARSLKV) is the HTH lacI-type domain. The H-T-H motif DNA-binding region spans 4 to 23 (IKDVAKHAGVSTTTVSHVIN). Residues 48 to 56 (SAVARSLKV) mediate DNA binding. Tyr-73, Arg-190, Thr-192, Phe-221, and Asp-275 together coordinate hypoxanthine.

As to quaternary structure, homodimer.

It functions in the pathway purine metabolism; purine nucleotide biosynthesis [regulation]. Is the main repressor of the genes involved in the de novo synthesis of purine nucleotides, regulating purB, purC, purEK, purF, purHD, purL, purMN and guaBA expression. PurR is allosterically activated to bind its cognate DNA by binding the purine corepressors, hypoxanthine or guanine, thereby effecting transcription repression. The protein is HTH-type transcriptional repressor PurR of Photorhabdus laumondii subsp. laumondii (strain DSM 15139 / CIP 105565 / TT01) (Photorhabdus luminescens subsp. laumondii).